The sequence spans 183 residues: Der GTPase-activating protein YihI (183 aa).

A compositionally biased stretch (low complexity) spans 1 to 18; that stretch reads MNQPSKAPRAPRSSAATP. Positions 1–114 are disordered; sequence MNQPSKAPRA…EEELAKLEND (114 aa). Over residues 25 to 34 the composition is skewed to basic and acidic residues; sequence RAELDQEARE. Residues 56–65 are compositionally biased toward low complexity; it reads NQKNKAAAQA. Residues 92 to 114 are compositionally biased toward basic and acidic residues; the sequence is PKAEAKPKPRLTPEEELAKLEND.

This sequence belongs to the YihI family. Interacts with Der.

Functionally, a GTPase-activating protein (GAP) that modifies Der/EngA GTPase function. May play a role in ribosome biogenesis. The protein is Der GTPase-activating protein YihI of Serratia proteamaculans (strain 568).